The following is a 292-amino-acid chain: Shikimate dehydrogenase (NADP(+)) (292 aa).

Shikimate is bound by residues 22–24 (SLS) and S69. Catalysis depends on K73, which acts as the Proton acceptor. Shikimate is bound by residues N94 and D111. Residues 135 to 139 (GVGGA) and I236 each bind NADP(+). Y238 contacts shikimate. NADP(+) is bound at residue G260.

This sequence belongs to the shikimate dehydrogenase family. As to quaternary structure, homodimer.

It catalyses the reaction shikimate + NADP(+) = 3-dehydroshikimate + NADPH + H(+). Its pathway is metabolic intermediate biosynthesis; chorismate biosynthesis; chorismate from D-erythrose 4-phosphate and phosphoenolpyruvate: step 4/7. In terms of biological role, involved in the biosynthesis of the chorismate, which leads to the biosynthesis of aromatic amino acids. Catalyzes the reversible NADPH linked reduction of 3-dehydroshikimate (DHSA) to yield shikimate (SA). In Streptococcus pyogenes serotype M2 (strain MGAS10270), this protein is Shikimate dehydrogenase (NADP(+)).